The primary structure comprises 194 residues: Fe/S biogenesis protein NfuA (194 aa).

2 residues coordinate [4Fe-4S] cluster: Cys-151 and Cys-154.

Belongs to the NfuA family. Homodimer. [4Fe-4S] cluster serves as cofactor.

Functionally, involved in iron-sulfur cluster biogenesis. Binds a 4Fe-4S cluster, can transfer this cluster to apoproteins, and thereby intervenes in the maturation of Fe/S proteins. Could also act as a scaffold/chaperone for damaged Fe/S proteins. This Vibrio vulnificus (strain CMCP6) protein is Fe/S biogenesis protein NfuA.